The sequence spans 1105 residues: Serine/threonine-protein kinase 4 homolog B (1105 aa).

Residues Phe-23–Phe-274 form the Protein kinase domain. Residues Leu-29–Val-37 and Lys-52 each bind ATP. The active-site Proton acceptor is the Asp-142. 3 disordered regions span residues Ser-348–Asn-396, Ser-411–Ala-482, and Pro-495–Leu-541. 2 stretches are compositionally biased toward low complexity: residues Gln-358–Asn-396 and Ser-411–Asn-437. Over residues Asp-438–Gln-458 the composition is skewed to polar residues. Low complexity-rich tracts occupy residues Asn-459–Ser-473 and Pro-513–Leu-541. Positions Ser-516–Asn-1105 are calpain-like cysteine protease-like. 4 domain III regions span residues Glu-641 to Phe-668, Val-791 to Ile-830, Ser-836 to Gln-972, and Val-1076 to Tyr-1103.

The protein in the N-terminal section; belongs to the protein kinase superfamily. STE Ser/Thr protein kinase family. STE20 subfamily. It in the C-terminal section; belongs to the peptidase C2 family. The cofactor is Mn(2+).

It carries out the reaction L-seryl-[protein] + ATP = O-phospho-L-seryl-[protein] + ADP + H(+). The enzyme catalyses L-threonyl-[protein] + ATP = O-phospho-L-threonyl-[protein] + ADP + H(+). Its function is as follows. Probable serine/threonine-protein kinase. The sequence is that of Serine/threonine-protein kinase 4 homolog B (krsB) from Dictyostelium discoideum (Social amoeba).